Here is an 86-residue protein sequence, read N- to C-terminus: Neurotoxin LmNaTx34.1 (86 aa).

The first 18 residues, 1-18 (MKTVILVVIALMVIEVQG), serve as a signal peptide directing secretion. One can recognise an LCN-type CS-alpha/beta domain in the interval 19–85 (DGYLMVRAGI…IWTYEKNTCS (67 aa)). Intrachain disulfides connect Cys-32-Cys-84, Cys-36-Cys-57, Cys-43-Cys-64, and Cys-47-Cys-66.

This sequence belongs to the long (4 C-C) scorpion toxin superfamily. Sodium channel inhibitor family. Beta subfamily. As to expression, expressed by the venom gland.

The protein resides in the secreted. In terms of biological role, binds voltage-independently at site-4 of sodium channels (Nav) and shift the voltage of activation toward more negative potentials thereby affecting sodium channel activation and promoting spontaneous and repetitive firing. This Lychas mucronatus (Chinese swimming scorpion) protein is Neurotoxin LmNaTx34.1.